The sequence spans 410 residues: Arginine deiminase (410 aa).

Cys399 serves as the catalytic Amidino-cysteine intermediate.

Belongs to the arginine deiminase family.

The protein resides in the cytoplasm. The enzyme catalyses L-arginine + H2O = L-citrulline + NH4(+). The protein operates within amino-acid degradation; L-arginine degradation via ADI pathway; carbamoyl phosphate from L-arginine: step 1/2. The protein is Arginine deiminase of Listeria monocytogenes serotype 4b (strain F2365).